Here is a 345-residue protein sequence, read N- to C-terminus: tRNA pseudouridine synthase B (345 aa).

The Nucleophile role is filled by Asp-39.

Belongs to the pseudouridine synthase TruB family. Type 1 subfamily.

It catalyses the reaction uridine(55) in tRNA = pseudouridine(55) in tRNA. Its function is as follows. Responsible for synthesis of pseudouridine from uracil-55 in the psi GC loop of transfer RNAs. In Rickettsia peacockii (strain Rustic), this protein is tRNA pseudouridine synthase B.